We begin with the raw amino-acid sequence, 278 residues long: MKHETIVLADGFRVGVSTVGTGAPLVFLHGLSVSAKAYEEMLTRLAEHGFRVIALDAANHGRSGSLPTGHTVEDMTRVTLKTLDELDIHRAIFAGHSMGGGMVVEIAARHPHRVAAAVLLDAAAGQEHHDNIKVGHYATLAFRAAKKLGEAVTDIVGDGYEAMHLRDTGEKLSFLGMLRDSVSGLRFVRAAFALMKADTTPLLHAMYRHGVPTAVLHGLHDQIVPYEAGLSTAKITNASFYGVDGFHSWMLADPELAADLIALALLDLFPRRYITGAG.

The 217-residue stretch at 24 to 240 folds into the AB hydrolase-1 domain; that stretch reads PLVFLHGLSV…STAKITNASF (217 aa). Catalysis depends on residues Ser97 and Asp221.

This sequence belongs to the AB hydrolase superfamily.

This Mycobacterium (Mycobacteriophage D29) protein is Putative non-heme haloperoxidase (59.2).